The following is a 439-amino-acid chain: Xylose isomerase (439 aa).

Active-site residues include histidine 99 and aspartate 102. Residues glutamate 230, glutamate 266, histidine 269, aspartate 294, aspartate 305, aspartate 307, and aspartate 337 each contribute to the Mg(2+) site.

It belongs to the xylose isomerase family. In terms of assembly, homotetramer. Mg(2+) is required as a cofactor.

The protein localises to the cytoplasm. The enzyme catalyses alpha-D-xylose = alpha-D-xylulofuranose. The protein is Xylose isomerase of Shouchella clausii (strain KSM-K16) (Alkalihalobacillus clausii).